The chain runs to 515 residues: Fc receptor-like protein 4 (515 aa).

An N-terminal signal peptide occupies residues 1-19; the sequence is MLLWASLLAFAPVCGQSAA. Over 20–387 the chain is Extracellular; it reads AHKPVISVHP…RETPGNRDGL (368 aa). Ig-like C2-type domains follow at residues 23–97, 102–183, 193–271, and 275–374; these read PVIS…NPVR, SDSL…NFKI, PELK…GNIH, and PSLQ…MVLN. 4 cysteine pairs are disulfide-bonded: Cys44/Cys85, Cys123/Cys167, Cys212/Cys261, and Cys310/Cys359. An N-linked (GlcNAc...) asparagine glycan is attached at Asn374. Residues 388-408 form a helical membrane-spanning segment; it reads VAAGATGGLLSALLLAVALLF. The Cytoplasmic segment spans residues 409–515; that stretch reads HCWRRRKSGV…GKISSKDEES (107 aa). Short sequence motifs (ITIM motif) lie at residues 449–454, 461–466, and 491–496; these read SLYVDV, LVYSEI, and VVYSEV. The interval 494–515 is disordered; sequence SEVKTQHPDNSAGKISSKDEES.

Interacts with PTPN6 and PTPN11. Phosphorylated on cytoplasmic tyrosines upon activation. Specifically expressed by memory and monocytoid B-cells which populate spleen and lymph nodes. Preferentially expressed in memory B-cells associated with mucosal tissue (at protein level).

The protein resides in the cell membrane. Functionally, may function as an inhibitor of the B-cell receptor signaling. May function in the B-cell-mediated immune response. The polypeptide is Fc receptor-like protein 4 (FCRL4) (Homo sapiens (Human)).